Reading from the N-terminus, the 264-residue chain is Thiazole synthase (264 aa).

Lys106 functions as the Schiff-base intermediate with DXP in the catalytic mechanism. 1-deoxy-D-xylulose 5-phosphate is bound by residues Gly167, Ala193–Gly194, and Asn215–Ser216.

It belongs to the ThiG family. In terms of assembly, homotetramer. Forms heterodimers with either ThiH or ThiS.

Its subcellular location is the cytoplasm. The catalysed reaction is [ThiS sulfur-carrier protein]-C-terminal-Gly-aminoethanethioate + 2-iminoacetate + 1-deoxy-D-xylulose 5-phosphate = [ThiS sulfur-carrier protein]-C-terminal Gly-Gly + 2-[(2R,5Z)-2-carboxy-4-methylthiazol-5(2H)-ylidene]ethyl phosphate + 2 H2O + H(+). Its pathway is cofactor biosynthesis; thiamine diphosphate biosynthesis. In terms of biological role, catalyzes the rearrangement of 1-deoxy-D-xylulose 5-phosphate (DXP) to produce the thiazole phosphate moiety of thiamine. Sulfur is provided by the thiocarboxylate moiety of the carrier protein ThiS. In vitro, sulfur can be provided by H(2)S. This chain is Thiazole synthase, found in Prochlorococcus marinus (strain AS9601).